Consider the following 164-residue polypeptide: Putative HTH-type transcriptional regulator ORF2 (164 aa).

Residues 2–131 (RLTTKGRYAV…SGISLADLVA (130 aa)) enclose the HTH rrf2-type domain.

This is Putative HTH-type transcriptional regulator ORF2 from Azotobacter vinelandii.